The sequence spans 230 residues: NADH dehydrogenase [ubiquinone] iron-sulfur protein 8, mitochondrial (230 aa).

Residues 1–42 constitute a mitochondrion transit peptide; sequence MAAILARKSLSALRSRQLVLAGQAWQQGANTSNGTLLGTRTF. 4Fe-4S ferredoxin-type domains follow at residues 122–151 and 161–190; these read RRYP…IEAE and TRYD…EGPN. [4Fe-4S] cluster-binding residues include Cys-131, Cys-134, Cys-137, Cys-141, Cys-170, Cys-173, Cys-176, and Cys-180.

Belongs to the complex I 23 kDa subunit family. In terms of assembly, complex I is composed of about 45 different subunits. This is a component of the iron-sulfur (IP) fragment of the enzyme. Requires [4Fe-4S] cluster as cofactor.

The protein localises to the mitochondrion. It catalyses the reaction a ubiquinone + NADH + 5 H(+)(in) = a ubiquinol + NAD(+) + 4 H(+)(out). Functionally, core subunit of the mitochondrial membrane respiratory chain NADH dehydrogenase (Complex I) that is believed to belong to the minimal assembly required for catalysis. Complex I functions in the transfer of electrons from NADH to the respiratory chain. The immediate electron acceptor for the enzyme is believed to be ubiquinone. May donate electrons to ubiquinone. This Nicotiana tabacum (Common tobacco) protein is NADH dehydrogenase [ubiquinone] iron-sulfur protein 8, mitochondrial.